We begin with the raw amino-acid sequence, 451 residues long: DNA double-strand break repair protein Mre11 (451 aa).

The Mn(2+) site is built by Asp8, His10, Asp49, and Asn84. His85 functions as the Proton donor in the catalytic mechanism. His168, His198, and His200 together coordinate Mn(2+). Residues 374 to 451 (REDNPPDLGD…GRPSLDRWIG (78 aa)) form a disordered region. Over residues 396–416 (GSEESSEEPEESDGEEVGLEV) the composition is skewed to acidic residues.

This sequence belongs to the MRE11/RAD32 family. In terms of assembly, homodimer. Forms a heterotetramer composed of two Mre11 subunits and two Rad50 subunits. Mn(2+) serves as cofactor.

Its activity is regulated as follows. Nuclease activity is regulated by Rad50. Its function is as follows. Part of the Rad50/Mre11 complex, which is involved in the early steps of DNA double-strand break (DSB) repair. The complex may facilitate opening of the processed DNA ends to aid in the recruitment of HerA and NurA. Mre11 binds to DSB ends and has both double-stranded 3'-5' exonuclease activity and single-stranded endonuclease activity. This is DNA double-strand break repair protein Mre11 from Methanopyrus kandleri (strain AV19 / DSM 6324 / JCM 9639 / NBRC 100938).